The sequence spans 197 residues: Phosphoheptose isomerase (197 aa).

Positions 36–197 constitute an SIS domain; sequence MVNALLNEGK…IDSQLFGSEE (162 aa). A substrate-binding site is contributed by 51-53; it reads NGG. Residues H60 and E64 each coordinate Zn(2+). Residues E64, 93–94, 119–121, S124, and Q174 contribute to the substrate site; these read ND and STS. Q174 and H182 together coordinate Zn(2+).

The protein belongs to the SIS family. GmhA subfamily. Homotetramer. Zn(2+) serves as cofactor.

It is found in the cytoplasm. The enzyme catalyses 2 D-sedoheptulose 7-phosphate = D-glycero-alpha-D-manno-heptose 7-phosphate + D-glycero-beta-D-manno-heptose 7-phosphate. It participates in carbohydrate biosynthesis; D-glycero-D-manno-heptose 7-phosphate biosynthesis; D-glycero-alpha-D-manno-heptose 7-phosphate and D-glycero-beta-D-manno-heptose 7-phosphate from sedoheptulose 7-phosphate: step 1/1. Functionally, catalyzes the isomerization of sedoheptulose 7-phosphate in D-glycero-D-manno-heptose 7-phosphate. This Pseudomonas putida (strain W619) protein is Phosphoheptose isomerase.